We begin with the raw amino-acid sequence, 273 residues long: SUMO-1 cysteine protease S273R (273 aa).

Catalysis depends on residues His168 and Asn187. Gln226 provides a ligand contact to substrate. The active-site Nucleophile is the Cys232.

The protein belongs to the peptidase C63 family.

The protein resides in the host cytoplasm. Its subcellular location is the virion. Its function is as follows. Cysteine protease that plays several role during infection including processing of the structural polyprotein or inhibition of the host immune response. Catalyzes the maturation of the pp220 and pp62 polyprotein precursors into core-shell proteins. Plays a role in the disruption of host pyroptosis via specific cleavage of gasdermin D/GSDMD. In addition, strongly decreases the host cGAS-STING signaling by targeting IKBKE via its enzymatic activity. Also impairs host FOXJ1-mediated antiviral effect via degradation of FOXJ1. This chain is SUMO-1 cysteine protease S273R, found in Ornithodoros (relapsing fever ticks).